Here is a 779-residue protein sequence, read N- to C-terminus: Glutathione biosynthesis bifunctional protein GshAB (779 aa).

The segment at 1–346 (MAFSKNILDS…ETANRNQEQA (346 aa)) is glutamate--cysteine ligase. The region spanning 512 to 768 (KKILDQAGIN…LDDKILDALG (257 aa)) is the ATP-grasp domain. 539-597 (PYYRGRAIVIKPKSTNFGIGITIIKENNRHDFFAQGIAQAFKHEATVLIENFSSGKEYR) lines the ATP pocket. Mg(2+)-binding residues include Asp-719, Glu-738, and Asn-740. Positions 719, 738, and 740 each coordinate Mn(2+).

The protein in the N-terminal section; belongs to the glutamate--cysteine ligase type 1 family. Type 2 subfamily. Monomer. Requires Mg(2+) as cofactor. Mn(2+) serves as cofactor.

It catalyses the reaction L-cysteine + L-glutamate + ATP = gamma-L-glutamyl-L-cysteine + ADP + phosphate + H(+). The catalysed reaction is gamma-L-glutamyl-L-cysteine + glycine + ATP = glutathione + ADP + phosphate + H(+). The protein operates within sulfur metabolism; glutathione biosynthesis; glutathione from L-cysteine and L-glutamate: step 1/2. Its pathway is sulfur metabolism; glutathione biosynthesis; glutathione from L-cysteine and L-glutamate: step 2/2. Its function is as follows. Synthesizes glutathione from L-glutamate and L-cysteine via gamma-L-glutamyl-L-cysteine. The protein is Glutathione biosynthesis bifunctional protein GshAB of Desulfotalea psychrophila (strain LSv54 / DSM 12343).